Consider the following 108-residue polypeptide: Class I hydrophobin eas (108 aa).

The N-terminal stretch at 1–26 (MQFTSVFTILAIAMTAAAAPAEVVPR) is a signal peptide. 4 disulfides stabilise this stretch: Cys35–Cys86, Cys44–Cys80, Cys45–Cys71, and Cys87–Cys106.

This sequence belongs to the fungal hydrophobin family. In terms of assembly, self-assembles to form functional amyloid fibrils called rodlets. Self-assembly into fibrillar rodlets occurs spontaneously at hydrophobic:hydrophilic interfaces and the rodlets further associate laterally to form amphipathic monolayers.

It localises to the secreted. Its subcellular location is the spore wall. In terms of biological role, aerial growth, conidiation, and dispersal of filamentous fungi in the environment rely upon a capability of their secreting small amphipathic proteins called hydrophobins (HPBs) with low sequence identity. Class I can self-assemble into an outermost layer of rodlet bundles on aerial cell surfaces, conferring cellular hydrophobicity that supports fungal growth, development and dispersal; whereas class II form highly ordered films at water-air interfaces through intermolecular interactions but contribute nothing to the rodlet structure. Eas is a class I hydrophobin that forms functional amyloid fibrils called rodlets that facilitate spore formation and dispersal. The sequence is that of Class I hydrophobin eas from Neurospora crassa (strain ATCC 24698 / 74-OR23-1A / CBS 708.71 / DSM 1257 / FGSC 987).